A 413-amino-acid chain; its full sequence is Gamma-glutamyl phosphate reductase (413 aa).

It belongs to the gamma-glutamyl phosphate reductase family.

It localises to the cytoplasm. It catalyses the reaction L-glutamate 5-semialdehyde + phosphate + NADP(+) = L-glutamyl 5-phosphate + NADPH + H(+). It participates in amino-acid biosynthesis; L-proline biosynthesis; L-glutamate 5-semialdehyde from L-glutamate: step 2/2. In terms of biological role, catalyzes the NADPH-dependent reduction of L-glutamate 5-phosphate into L-glutamate 5-semialdehyde and phosphate. The product spontaneously undergoes cyclization to form 1-pyrroline-5-carboxylate. This is Gamma-glutamyl phosphate reductase from Salinispora tropica (strain ATCC BAA-916 / DSM 44818 / JCM 13857 / NBRC 105044 / CNB-440).